We begin with the raw amino-acid sequence, 660 residues long: Bifunctional polymyxin resistance protein ArnA (660 aa).

The segment at 1–304 (MKTVVFAYHD…TLGLVQGSRL (304 aa)) is formyltransferase ArnAFT. 86–88 (HLI) lines the (6R)-10-formyltetrahydrofolate pocket. The Proton donor; for formyltransferase activity role is filled by H104. (6R)-10-formyltetrahydrofolate is bound by residues R114 and 136–140 (VKRAD). Positions 314-660 (RRTRVLILGV…RTVDLTDKPS (347 aa)) are dehydrogenase ArnADH. NAD(+) is bound by residues D347 and 368–369 (DI). UDP-alpha-D-glucuronate-binding positions include A393, Y398, and 432–433 (TS). Catalysis depends on E434, which acts as the Proton acceptor; for decarboxylase activity. UDP-alpha-D-glucuronate-binding positions include R460, N492, 526 to 535 (KLIDGGKQKR), and Y613. Residue R619 is the Proton donor; for decarboxylase activity of the active site.

In the N-terminal section; belongs to the Fmt family. UDP-L-Ara4N formyltransferase subfamily. The protein in the C-terminal section; belongs to the NAD(P)-dependent epimerase/dehydratase family. UDP-glucuronic acid decarboxylase subfamily. Homohexamer, formed by a dimer of trimers.

The catalysed reaction is UDP-alpha-D-glucuronate + NAD(+) = UDP-beta-L-threo-pentopyranos-4-ulose + CO2 + NADH. It catalyses the reaction UDP-4-amino-4-deoxy-beta-L-arabinose + (6R)-10-formyltetrahydrofolate = UDP-4-deoxy-4-formamido-beta-L-arabinose + (6S)-5,6,7,8-tetrahydrofolate + H(+). It functions in the pathway nucleotide-sugar biosynthesis; UDP-4-deoxy-4-formamido-beta-L-arabinose biosynthesis; UDP-4-deoxy-4-formamido-beta-L-arabinose from UDP-alpha-D-glucuronate: step 1/3. The protein operates within nucleotide-sugar biosynthesis; UDP-4-deoxy-4-formamido-beta-L-arabinose biosynthesis; UDP-4-deoxy-4-formamido-beta-L-arabinose from UDP-alpha-D-glucuronate: step 3/3. It participates in bacterial outer membrane biogenesis; lipopolysaccharide biosynthesis. Its function is as follows. Bifunctional enzyme that catalyzes the oxidative decarboxylation of UDP-glucuronic acid (UDP-GlcUA) to UDP-4-keto-arabinose (UDP-Ara4O) and the addition of a formyl group to UDP-4-amino-4-deoxy-L-arabinose (UDP-L-Ara4N) to form UDP-L-4-formamido-arabinose (UDP-L-Ara4FN). The modified arabinose is attached to lipid A and is required for resistance to polymyxin and cationic antimicrobial peptides. This Escherichia coli O157:H7 protein is Bifunctional polymyxin resistance protein ArnA.